The primary structure comprises 847 residues: Beta-galactosidase 1 (847 aa).

An N-terminal signal peptide occupies residues 1-32 (MGSKPNAMKNVVAMAAVSALFLLGFLVCSVSG). The active-site Proton donor is Glu190. The active-site Nucleophile is Glu259. N-linked (GlcNAc...) asparagine glycosylation is present at Asn469. The region spanning 761–847 (KPLHPKAHLQ…KKLAVEAVCA (87 aa)) is the SUEL-type lectin domain.

Belongs to the glycosyl hydrolase 35 family. In terms of tissue distribution, ubiquitous, at low levels.

The protein resides in the secreted. Its subcellular location is the extracellular space. It localises to the apoplast. It catalyses the reaction Hydrolysis of terminal non-reducing beta-D-galactose residues in beta-D-galactosides.. In Arabidopsis thaliana (Mouse-ear cress), this protein is Beta-galactosidase 1 (BGAL1).